The primary structure comprises 111 residues: Large ribosomal subunit protein P2 (111 aa).

A disordered region spans residues 62 to 111 (LASVPSGGAGGAAAAGGAAAAGGAAEAAPEEAKEEEKEESDDDMGFGLFD). Positions 76–88 (AGGAAAAGGAAEA) are enriched in low complexity. S101 is subject to Phosphoserine.

The protein belongs to the eukaryotic ribosomal protein P1/P2 family. P1 and P2 exist as dimers at the large ribosomal subunit.

In terms of biological role, plays an important role in the elongation step of protein synthesis. This Podospora anserina (Pleurage anserina) protein is Large ribosomal subunit protein P2.